A 223-amino-acid chain; its full sequence is Protein-L-isoaspartate O-methyltransferase (223 aa).

The active site involves S70.

The protein belongs to the methyltransferase superfamily. L-isoaspartyl/D-aspartyl protein methyltransferase family.

The protein resides in the cytoplasm. It carries out the reaction [protein]-L-isoaspartate + S-adenosyl-L-methionine = [protein]-L-isoaspartate alpha-methyl ester + S-adenosyl-L-homocysteine. Catalyzes the methyl esterification of L-isoaspartyl residues in peptides and proteins that result from spontaneous decomposition of normal L-aspartyl and L-asparaginyl residues. It plays a role in the repair and/or degradation of damaged proteins. This is Protein-L-isoaspartate O-methyltransferase from Saccharophagus degradans (strain 2-40 / ATCC 43961 / DSM 17024).